We begin with the raw amino-acid sequence, 392 residues long: 26S proteasome regulatory subunit 8 homolog (392 aa).

176–183 (GPPGTGKT) is an ATP binding site.

The protein belongs to the AAA ATPase family. The 26S proteasome consists of a 20S proteasome core and two 19S regulatory subunits. The 20S proteasome core is composed of 28 subunits that are arranged in four stacked rings, resulting in a barrel-shaped structure. The two end rings are each formed by seven alpha subunits, and the two central rings are each formed by seven beta subunits. The catalytic chamber with the active sites is on the inside of the barrel.

The protein resides in the cytoplasm. The protein localises to the nucleus. Its function is as follows. Acts as a regulatory subunit of the 26S proteasome which degrades poly-ubiquitinated proteins in the cytoplasm and in the nucleus. It is essential for the regulated turnover of proteins and for the removal of misfolded proteins. The proteasome is a multicatalytic proteinase complex that is characterized by its ability to cleave peptides with Arg, Phe, Tyr, Leu, and Glu adjacent to the leaving group at neutral or slightly basic pH. The sequence is that of 26S proteasome regulatory subunit 8 homolog (RPT6) from Encephalitozoon cuniculi (strain GB-M1) (Microsporidian parasite).